Consider the following 507-residue polypeptide: MRRSIATGFASIVKGFHLHSHRHRLQISNPRTAASLSLCGFCFWIRAFSSYRKILRNGLHNLQFNDALDLFTRMVHSRPLPSIIDFTRLLSVIAKMNRYDVVISLFEQMQILGIPPLLCTCNIVMHCVCLSSQPCRASCFLGKMMKLGFEPDLVTFTSLLNGYCHWNRIEDAIALFDQILGMGFKPNVVTYTTLIRCLCKNRHLNHAVELFNQMGTNGSRPNVVTYNALVTGLCEIGRWGDAAWLLRDMMKRRIEPNVITFTALIDAFVKVGKLMEAKELYNVMIQMSVYPDVFTYGSLINGLCMYGLLDEARQMFYLMERNGCYPNEVIYTTLIHGFCKSKRVEDGMKIFYEMSQKGVVANTITYTVLIQGYCLVGRPDVAQEVFNQMSSRRAPPDIRTYNVLLDGLCCNGKVEKALMIFEYMRKREMDINIVTYTIIIQGMCKLGKVEDAFDLFCSLFSKGMKPNVITYTTMISGFCRRGLIHEADSLFKKMKEDGFLPNESVYK.

A mitochondrion-targeting transit peptide spans 1–48; sequence MRRSIATGFASIVKGFHLHSHRHRLQISNPRTAASLSLCGFCFWIRAF. PPR repeat units lie at residues 47-81, 82-116, 117-151, 152-186, 187-221, 222-256, 257-291, 292-326, 327-361, 362-396, 397-431, 432-466, and 467-501; these read AFSS…RPLP, SIID…GIPP, LLCT…GFEP, DLVT…GFKP, NVVT…GSRP, NVVT…RIEP, NVIT…SVYP, DVFT…GCYP, NEVI…GVVA, NTIT…RAPP, DIRT…EMDI, NIVT…GMKP, and NVIT…GFLP.

It belongs to the PPR family. P subfamily.

Its subcellular location is the mitochondrion. The protein is Putative pentatricopeptide repeat-containing protein At3g16710, mitochondrial of Arabidopsis thaliana (Mouse-ear cress).